Here is a 119-residue protein sequence, read N- to C-terminus: Large ribosomal subunit protein uL18 (119 aa).

The protein belongs to the universal ribosomal protein uL18 family. Part of the 50S ribosomal subunit; part of the 5S rRNA/L5/L18/L25 subcomplex. Contacts the 5S and 23S rRNAs.

This is one of the proteins that bind and probably mediate the attachment of the 5S RNA into the large ribosomal subunit, where it forms part of the central protuberance. In Chlorobium phaeovibrioides (strain DSM 265 / 1930) (Prosthecochloris vibrioformis (strain DSM 265)), this protein is Large ribosomal subunit protein uL18.